The primary structure comprises 388 residues: Chalcone synthase D (388 aa).

C164 is a catalytic residue.

This sequence belongs to the thiolase-like superfamily. Chalcone/stilbene synthases family.

The enzyme catalyses (E)-4-coumaroyl-CoA + 3 malonyl-CoA + 3 H(+) = 2',4,4',6'-tetrahydroxychalcone + 3 CO2 + 4 CoA. The protein operates within secondary metabolite biosynthesis; flavonoid biosynthesis. In terms of biological role, the primary product of this enzyme is 4,2',4',6'-tetrahydroxychalcone (also termed naringenin-chalcone or chalcone) which can under specific conditions spontaneously isomerize into naringenin. The protein is Chalcone synthase D (CHSD) of Ipomoea nil (Japanese morning glory).